Reading from the N-terminus, the 583-residue chain is Probable GTP diphosphokinase CRSH, chloroplastic (583 aa).

The transit peptide at 1–58 (MSVIRPSPIPIPRCRSQVLHRRLYSIQLIQRRRRRWNPRSEVEDTAIESTARSPEAAG) directs the protein to the chloroplast. Residues 112 to 212 (PLSKALSLSI…MDLVSKLDEM (101 aa)) enclose the HD domain. EF-hand domains lie at 470–505 (TTTNQRDRVFCLLDKNGDGMISIEELMEVMEELGAP) and 507–539 (EDAEEMMQLLDSNSDGSLSSDEFDTFQKQVEFM). 10 residues coordinate Ca(2+): Asp483, Asn485, Asp487, Met489, Glu494, Asp517, Asn519, Asp521, Ser523, and Glu528.

Belongs to the RelA/SpoT family. As to expression, expressed in shoots, cotyledons, rosette and cauline leaves, stems, sepals, pistils and siliques.

It localises to the plastid. The protein resides in the chloroplast. It carries out the reaction GTP + ATP = guanosine 3'-diphosphate 5'-triphosphate + AMP. With respect to regulation, activated by calcium. Possesses calcium-dependent ppGpp (guanosine 3'-diphosphate 5'-diphosphate) synthetase activity in vitro and is able to functionally complement E.coli relA mutants. Plays an important role in the timing adjustment of pistil and pollen maturation required for successful pollination. May be involved in a rapid plant ppGpp-mediated response to pathogens and other stresses. This chain is Probable GTP diphosphokinase CRSH, chloroplastic (CRSH), found in Arabidopsis thaliana (Mouse-ear cress).